A 447-amino-acid chain; its full sequence is Blue-light photoreceptor PHR2 (447 aa).

The segment covering 1–14 (MDSSNVEENLNPET) has biased composition (polar residues). The tract at residues 1-20 (MDSSNVEENLNPETKSAEEQ) is disordered. The Photolyase/cryptochrome alpha/beta domain occupies 115 to 249 (RAAVVWFRND…EVKYFWGSTL (135 aa)).

Belongs to the DNA photolyase class-1 family. Requires FAD as cofactor.

This is Blue-light photoreceptor PHR2 (PHR2) from Arabidopsis thaliana (Mouse-ear cress).